A 248-amino-acid polypeptide reads, in one-letter code: Pyridoxine 5'-phosphate synthase (248 aa).

Position 12 (asparagine 12) interacts with 3-amino-2-oxopropyl phosphate. 1-deoxy-D-xylulose 5-phosphate is bound at residue 14-15 (DH). Arginine 23 serves as a coordination point for 3-amino-2-oxopropyl phosphate. The active-site Proton acceptor is the histidine 48. 2 residues coordinate 1-deoxy-D-xylulose 5-phosphate: arginine 50 and histidine 55. Residue glutamate 75 is the Proton acceptor of the active site. Threonine 105 is a binding site for 1-deoxy-D-xylulose 5-phosphate. Histidine 196 acts as the Proton donor in catalysis. Residues glycine 197 and 218–219 (GH) each bind 3-amino-2-oxopropyl phosphate.

This sequence belongs to the PNP synthase family. As to quaternary structure, homooctamer; tetramer of dimers.

The protein resides in the cytoplasm. The enzyme catalyses 3-amino-2-oxopropyl phosphate + 1-deoxy-D-xylulose 5-phosphate = pyridoxine 5'-phosphate + phosphate + 2 H2O + H(+). It functions in the pathway cofactor biosynthesis; pyridoxine 5'-phosphate biosynthesis; pyridoxine 5'-phosphate from D-erythrose 4-phosphate: step 5/5. In terms of biological role, catalyzes the complicated ring closure reaction between the two acyclic compounds 1-deoxy-D-xylulose-5-phosphate (DXP) and 3-amino-2-oxopropyl phosphate (1-amino-acetone-3-phosphate or AAP) to form pyridoxine 5'-phosphate (PNP) and inorganic phosphate. The sequence is that of Pyridoxine 5'-phosphate synthase from Ectopseudomonas mendocina (strain ymp) (Pseudomonas mendocina).